We begin with the raw amino-acid sequence, 279 residues long: 3-methyl-2-oxobutanoate hydroxymethyltransferase (279 aa).

Asp43 and Asp82 together coordinate Mg(2+). 3-methyl-2-oxobutanoate is bound by residues 43–44, Asp82, and Lys112; that span reads DS. Glu114 lines the Mg(2+) pocket. The Proton acceptor role is filled by Glu181.

The protein belongs to the PanB family. In terms of assembly, homodecamer; pentamer of dimers. It depends on Mg(2+) as a cofactor.

Its subcellular location is the cytoplasm. The catalysed reaction is 3-methyl-2-oxobutanoate + (6R)-5,10-methylene-5,6,7,8-tetrahydrofolate + H2O = 2-dehydropantoate + (6S)-5,6,7,8-tetrahydrofolate. Its pathway is cofactor biosynthesis; (R)-pantothenate biosynthesis; (R)-pantoate from 3-methyl-2-oxobutanoate: step 1/2. In terms of biological role, catalyzes the reversible reaction in which hydroxymethyl group from 5,10-methylenetetrahydrofolate is transferred onto alpha-ketoisovalerate to form ketopantoate. The protein is 3-methyl-2-oxobutanoate hydroxymethyltransferase of Geobacillus thermodenitrificans (strain NG80-2).